The following is a 283-amino-acid chain: Gap junction alpha-6 protein (283 aa).

Over 1–23 (MSDWSALHQLLEKVQPYSTAGGK) the chain is Cytoplasmic. The chain crosses the membrane as a helical span at residues 24–41 (VWIKVLFIFRILLLGTAI). The Extracellular portion of the chain corresponds to 42–76 (ESAWSDEQFEFHCNTQQPGCENVCYDHAFPISHVR). A helical membrane pass occupies residues 77–99 (LWVLQVIFVSVPILLYLAHVYYV). Residues 100-150 (VRQNKKLNKQEEELEAAHFNEASVERHLETIAGEQFKCGSEEQSKVKMRGR) lie on the Cytoplasmic side of the membrane. Residues 151 to 173 (LLLTYMASIFFKSVFEMAFLLIQ) form a helical membrane-spanning segment. Topologically, residues 174 to 208 (WYIYGFTLSALYICEQSPCPRRVDCFLSRPTEKTI) are extracellular. The chain crosses the membrane as a helical span at residues 209–231 (FILFMFVVSVVSFVLDIIELFYV). Topologically, residues 232–283 (LFKAIKNRMRKAEDEVYCDELPCPSHVSSSTVLTTIDSSEQAVPVELSSVCI) are cytoplasmic.

This sequence belongs to the connexin family. Alpha-type (group II) subfamily. As to quaternary structure, a connexon is composed of a hexamer of connexins.

It is found in the cell membrane. It localises to the cell junction. Its subcellular location is the gap junction. Its function is as follows. One gap junction consists of a cluster of closely packed pairs of transmembrane channels, the connexons, through which materials of low MW diffuse from one cell to a neighboring cell. The sequence is that of Gap junction alpha-6 protein (Gja6) from Mus musculus (Mouse).